A 579-amino-acid chain; its full sequence is Pre-mRNA-processing protein 45 (579 aa).

4 disordered regions span residues 1 to 64 (MTSV…GWRP), 218 to 254 (QQDPMEPPKFKHKKIPRGPPSPPPPIMHSPPRKLTAE), 343 to 414 (QKAR…TERR), and 521 to 579 (AAEA…VDDD). Positions 234–245 (RGPPSPPPPIMH) are enriched in pro residues. Residues 343–359 (QKAREERAASNRRDSRA) show a composition bias toward basic and acidic residues. Low complexity predominate over residues 366 to 379 (ASRSPSAYSRSATP). Basic and acidic residues-rich tracts occupy residues 386–414 (ARERERIRRERRQDAERQLRQSRMGTERR), 521–538 (AAEAEARDGPVQFEKDTT), and 563–579 (EVEREDRGSKRARVDDD).

This sequence belongs to the SNW family. As to quaternary structure, associated with the spliceosome.

The protein localises to the nucleus. Functionally, involved in pre-mRNA splicing. This is Pre-mRNA-processing protein 45 (prp45) from Aspergillus fumigatus (strain ATCC MYA-4609 / CBS 101355 / FGSC A1100 / Af293) (Neosartorya fumigata).